Here is a 389-residue protein sequence, read N- to C-terminus: Probable family 17 glucosidase SCW10 (389 aa).

Positions 1-18 (MRFSNFLTVSALLTGALG) are cleaved as a signal peptide. A propeptide spanning residues 19–29 (APAVRHKHEKR) is cleaved from the precursor. Positions 70 to 134 (ASQATTSTLE…SSASSSISAS (65 aa)) are disordered. N-linked (GlcNAc...) asparagine glycosylation occurs at N279. E326 (nucleophile) is an active-site residue.

It belongs to the glycosyl hydrolase 17 family. Post-translationally, glycosylated.

The protein localises to the secreted. The protein resides in the cell wall. In terms of biological role, glucanases possibly play a role in cell expansion during growth, in cell-cell fusion during mating, and in spore release during sporulation. The chain is Probable family 17 glucosidase SCW10 (SCW10) from Saccharomyces cerevisiae (strain ATCC 204508 / S288c) (Baker's yeast).